The following is a 134-amino-acid chain: Transcription antitermination protein NusB (134 aa).

The protein belongs to the NusB family.

Its function is as follows. Involved in transcription antitermination. Required for transcription of ribosomal RNA (rRNA) genes. Binds specifically to the boxA antiterminator sequence of the ribosomal RNA (rrn) operons. In Shewanella sp. (strain MR-4), this protein is Transcription antitermination protein NusB.